The primary structure comprises 157 residues: 2-C-methyl-D-erythritol 2,4-cyclodiphosphate synthase (157 aa).

Residues aspartate 8 and histidine 10 each contribute to the a divalent metal cation site. 4-CDP-2-C-methyl-D-erythritol 2-phosphate is bound by residues 8–10 (DVH) and 34–35 (HS). Position 42 (histidine 42) interacts with a divalent metal cation. 4-CDP-2-C-methyl-D-erythritol 2-phosphate-binding positions include 56–58 (DLG), 61–65 (FPDTD), 132–135 (TTTE), phenylalanine 139, and arginine 142.

It belongs to the IspF family. In terms of assembly, homotrimer. The cofactor is a divalent metal cation.

It catalyses the reaction 4-CDP-2-C-methyl-D-erythritol 2-phosphate = 2-C-methyl-D-erythritol 2,4-cyclic diphosphate + CMP. Its pathway is isoprenoid biosynthesis; isopentenyl diphosphate biosynthesis via DXP pathway; isopentenyl diphosphate from 1-deoxy-D-xylulose 5-phosphate: step 4/6. Functionally, involved in the biosynthesis of isopentenyl diphosphate (IPP) and dimethylallyl diphosphate (DMAPP), two major building blocks of isoprenoid compounds. Catalyzes the conversion of 4-diphosphocytidyl-2-C-methyl-D-erythritol 2-phosphate (CDP-ME2P) to 2-C-methyl-D-erythritol 2,4-cyclodiphosphate (ME-CPP) with a corresponding release of cytidine 5-monophosphate (CMP). This Salinibacter ruber (strain DSM 13855 / M31) protein is 2-C-methyl-D-erythritol 2,4-cyclodiphosphate synthase.